The chain runs to 177 residues: Isopentenyl-diphosphate Delta-isomerase (177 aa).

2 residues coordinate Mn(2+): His22 and His28. A Nudix hydrolase domain is found at 26–160 (LRHMAISVFV…PERFTPWLRI (135 aa)). Residue Cys62 is part of the active site. Residue His64 coordinates Mn(2+). Glu82 lines the Mg(2+) pocket. 2 residues coordinate Mn(2+): Glu108 and Glu110. Glu110 is an active-site residue.

This sequence belongs to the IPP isomerase type 1 family. Requires Mg(2+) as cofactor. The cofactor is Mn(2+).

It localises to the cytoplasm. It carries out the reaction isopentenyl diphosphate = dimethylallyl diphosphate. It participates in isoprenoid biosynthesis; dimethylallyl diphosphate biosynthesis; dimethylallyl diphosphate from isopentenyl diphosphate: step 1/1. The protein operates within porphyrin-containing compound metabolism; chlorophyll biosynthesis. In terms of biological role, catalyzes the 1,3-allylic rearrangement of the homoallylic substrate isopentenyl (IPP) to its highly electrophilic allylic isomer, dimethylallyl diphosphate (DMAPP). In Cereibacter sphaeroides (strain ATCC 17029 / ATH 2.4.9) (Rhodobacter sphaeroides), this protein is Isopentenyl-diphosphate Delta-isomerase.